Reading from the N-terminus, the 364-residue chain is Dihydroflavonol 4-reductase (364 aa).

NADP(+)-binding residues include Lys-45 and Tyr-164.

This sequence belongs to the NAD(P)-dependent epimerase/dehydratase family. Dihydroflavonol-4-reductase subfamily.

The enzyme catalyses a (2R,3S,4S)-leucoanthocyanidin + NADP(+) = a (2R,3R)-dihydroflavonol + NADPH + H(+). It catalyses the reaction (2S)-flavan-4-ol + NADP(+) = (2S)-flavanone + NADPH + H(+). It functions in the pathway pigment biosynthesis; anthocyanin biosynthesis. In terms of biological role, bifunctional enzyme involved in flavonoid metabolism. This chain is Dihydroflavonol 4-reductase (F), found in Callistephus chinensis (China aster).